The chain runs to 202 residues: Imidazoleglycerol-phosphate dehydratase (202 aa).

The protein belongs to the imidazoleglycerol-phosphate dehydratase family.

The protein resides in the cytoplasm. It carries out the reaction D-erythro-1-(imidazol-4-yl)glycerol 3-phosphate = 3-(imidazol-4-yl)-2-oxopropyl phosphate + H2O. It participates in amino-acid biosynthesis; L-histidine biosynthesis; L-histidine from 5-phospho-alpha-D-ribose 1-diphosphate: step 6/9. The sequence is that of Imidazoleglycerol-phosphate dehydratase from Salinibacter ruber (strain DSM 13855 / M31).